A 431-amino-acid chain; its full sequence is MLTIKNWQLLSENDKKLCLSRPRQSSAIKENVLEIINQVQLSGDKALYDLTKQFDRVNLQYLQVPQETIEQANIPQNALNAITQAIGTISSYHQSLLPENTEISTASGITIRNVYRPIQKVGLYVPGGNKTPLVSSLLMQAIPAKVAGCPIKVLCTPPDAEGEINEHILVAARLCGIDTIYAIGGAQAIAAMAYGTESVIKVDKIFGPGNSYVTQAKTLVAIDANGAAIDMPAGPSEVMILADTEANSEFIAADLLAQAEHGPDSQVILICDECELANQVNQQLEIQMSYLSRIEFIKQSLANSRIIICSNQSEQLDIINSYAPEHLIINRKNPESWVEKIVAAGTVFLGSWAAETMGDYVTGSNHVLPTNGFARNHSGLSTLDFMTRFTVQAINQEAICNLGPAAMALAELEGLDAHANAVQIRLNTLGD.

Residues Tyr-124, Gln-187, and Asn-210 each coordinate NAD(+). Residues Ser-236, Gln-258, and His-261 each contribute to the substrate site. The Zn(2+) site is built by Gln-258 and His-261. Catalysis depends on proton acceptor residues Glu-325 and His-326. Residues His-326, Asp-359, Glu-413, and His-418 each coordinate substrate. Asp-359 serves as a coordination point for Zn(2+). His-418 contacts Zn(2+).

It belongs to the histidinol dehydrogenase family. Zn(2+) serves as cofactor.

The enzyme catalyses L-histidinol + 2 NAD(+) + H2O = L-histidine + 2 NADH + 3 H(+). The protein operates within amino-acid biosynthesis; L-histidine biosynthesis; L-histidine from 5-phospho-alpha-D-ribose 1-diphosphate: step 9/9. Its function is as follows. Catalyzes the sequential NAD-dependent oxidations of L-histidinol to L-histidinaldehyde and then to L-histidine. This chain is Histidinol dehydrogenase, found in Legionella pneumophila (strain Lens).